The sequence spans 406 residues: Aspartokinase (406 aa).

An ACT domain is found at 342 to 406 (IIGHGIKNDL…LLKISETGHC (65 aa)).

This sequence belongs to the aspartokinase family.

The enzyme catalyses L-aspartate + ATP = 4-phospho-L-aspartate + ADP. The protein operates within amino-acid biosynthesis; L-lysine biosynthesis via DAP pathway; (S)-tetrahydrodipicolinate from L-aspartate: step 1/4. It participates in amino-acid biosynthesis; L-methionine biosynthesis via de novo pathway; L-homoserine from L-aspartate: step 1/3. Its pathway is amino-acid biosynthesis; L-threonine biosynthesis; L-threonine from L-aspartate: step 1/5. The sequence is that of Aspartokinase (lysC) from Rickettsia bellii (strain RML369-C).